The primary structure comprises 1013 residues: Poly [ADP-ribose] polymerase 1 (1013 aa).

An N-acetylalanine modification is found at A2. The segment at 9–93 (YRVEYAKSGR…KVKKTAEAGG (85 aa)) adopts a PARP-type 1 zinc-finger fold. Residues C21 and C24 each contribute to the Zn(2+) site. S41 bears the Phosphoserine mark. Zn(2+)-binding residues include H53 and C56. N6-acetyllysine is present on residues K97 and K105. The segment at 113–203 (FAAEYAKSNR…VLKKQLPGVK (91 aa)) adopts a PARP-type 2 zinc-finger fold. C125 and C128 together coordinate Zn(2+). K131 carries the post-translational modification N6-acetyllysine. Zn(2+) is bound by residues H159 and C162. S177, S179, and S185 each carry phosphoserine. A Glycyl lysine isopeptide (Lys-Gly) (interchain with G-Cter in SUMO2) cross-link involves residue K192. A disordered region spans residues 198-233 (QLPGVKSEGKRKGDEVDGADEVAKKKSKKGKDKDSK). A Glycyl lysine isopeptide (Lys-Gly) (interchain with G-Cter in SUMO1); alternate cross-link involves residue K203. A Glycyl lysine isopeptide (Lys-Gly) (interchain with G-Cter in SUMO2); alternate cross-link involves residue K203. Short sequence motifs (nuclear localization signal) lie at residues 207–209 (KRK) and 221–226 (KKKSKK). One can recognise a PADR1 zinc-binding domain in the interval 225–359 (KKGKDKDSKL…VKKQDRIFPP (135 aa)). Residue K249 forms a Glycyl lysine isopeptide (Lys-Gly) (interchain with G-Cter in SUMO2) linkage. Phosphoserine occurs at positions 274 and 277. The segment at 290-332 (GALLPCKECSGQLVFKSDAYYCTGDVTAWTKCMVKTQTPSRKE) is zinc ribbon. C295, C298, C311, and C321 together coordinate Zn(2+). The interval 357 to 383 (FPPETSAPAPPHLPPSVTSAPTAVNSS) is disordered. Residues 372 to 383 (SVTSAPTAVNSS) show a composition bias toward polar residues. Residues 373-523 (VTSAPTAVNS…GVNKSEKRMK (151 aa)) form an automodification domain region. Positions 385-476 (PADKPLSNMK…KSLQELLSAH (92 aa)) constitute a BRCT domain. D387 bears the PolyADP-ribosyl aspartic acid mark. Residues E407, E413, E435, E437, E444, E445, and E456 each carry the polyADP-ribosyl glutamic acid modification. A Glycyl lysine isopeptide (Lys-Gly) (interchain with G-Cter in SUMO2) cross-link involves residue K467. Residues E471 and E484 each carry the polyADP-ribosyl glutamic acid modification. A Glycyl lysine isopeptide (Lys-Gly) (interchain with G-Cter in SUMO1); alternate cross-link involves residue K486. Residue K486 forms a Glycyl lysine isopeptide (Lys-Gly) (interchain with G-Cter in SUMO2); alternate linkage. 2 positions are modified to polyADP-ribosyl glutamic acid: E488 and E491. Residues 495-516 (PKGKSAAPSKKSKGLYKEEGVN) form a disordered region. An ADP-ribosylserine mark is found at S499, S503, and S506. A Glycyl lysine isopeptide (Lys-Gly) (interchain with G-Cter in SUMO2) cross-link involves residue K511. E512 and E513 each carry polyADP-ribosyl glutamic acid. An ADP-ribosylserine modification is found at S518. E519 bears the PolyADP-ribosyl glutamic acid mark. K520 is modified (N6-(ADP-ribosyl)lysine). A Glycyl lysine isopeptide (Lys-Gly) (interchain with G-Cter in SUMO2) cross-link involves residue K527. The WGR domain maps to 541–637 (SAHVLEKGGK…KNFTKYPKKF (97 aa)). The residue at position 593 (T593) is a Phosphothreonine. 2 positions are modified to N6-acetyllysine: K599 and K620. The 118-residue stretch at 661–778 (KSKLPKAVQE…DIEVAYSLLR (118 aa)) folds into the PARP alpha-helical domain. A Glycyl lysine isopeptide (Lys-Gly) (interchain with G-Cter in SUMO1); alternate cross-link involves residue K747. Residue K747 forms a Glycyl lysine isopeptide (Lys-Gly) (interchain with G-Cter in SUMO2); alternate linkage. Residues S781 and S785 each carry the phosphoserine modification. In terms of domain architecture, PARP catalytic spans 787 to 1013 (DPIDVNYEKL…LKFNFKTSLW (227 aa)). NAD(+) is bound by residues 861 to 863 (HGS), G870, R877, and S903. E987 serves as the catalytic For poly [ADP-ribose] polymerase activity.

It belongs to the ARTD/PARP family. Homodimer; PARP-type zinc-fingers from separate PARP1 molecules form a dimer module that specifically recognizes DNA strand breaks. Heterodimer; heterodimerizes with PARP2. Interacts (via the PARP catalytic domain) with HPF1. Interacts with NMNAT1. Interacts with nucleosomes; with a preference for nucleosomes containing H2A.X. Interacts with APTX. Component of a base excision repair (BER) complex, containing at least XRCC1, PARP1, PARP2, POLB and LRIG3. Interacts with SRY. The SWAP complex consists of NPM1, NCL, PARP1 and SWAP70. Interacts with TIAM2. Interacts with PARP3; leading to activate PARP1 in absence of DNA. Interacts (when poly-ADP-ribosylated) with CHD1L (via macro domain). Interacts with the DNA polymerase alpha catalytic subunit POLA1; this interaction functions as part of the control of replication fork progression. Interacts with EEF1A1 and TXK. Interacts with RNF4. Interacts with RNF146. Interacts with ZNF423. Interacts with APLF. Interacts with SNAI1 (via zinc fingers); the interaction requires SNAI1 to be poly-ADP-ribosylated and non-phosphorylated (active) by GSK3B. Interacts (when poly-ADP-ribosylated) with PARP9. Interacts with NR4A3; activates PARP1 by improving acetylation of PARP1 and suppressing the interaction between PARP1 and SIRT1. Interacts (via catalytic domain) with PUM3; the interaction inhibits the poly-ADP-ribosylation activity of PARP1 and the degradation of PARP1 by CASP3 following genotoxic stress. Interacts with ZNF365. Interacts with RRP1B. Interacts with TIMELESS; the interaction is direct. Interacts with CGAS; leading to impede the formation of the PARP1-TIMELESS complex. Interacts with KHDC3L, the interaction is increased following the formation of DNA double-strand breaks. Interacts (when auto-poly-ADP-ribosylated) with XRCC1; leading to inhibit PARP1 ADP-ribosyltransferase activity. Interacts with SPINDOC; promoting PARP1 ADP-ribosyltransferase activity. Interacts with BANF1; leading to inhibit PARP1 ADP-ribosyltransferase activity in response to oxidative DNA damage. Interacts (when sumoylated and ubiquitinated) with VCP/p97; leading to its extraction from chromatin. Interacts with YARS1; promoting PARP1 ADP-ribosyltransferase activity. Interacts with PACMP micropeptide; Interacts with PACMP micropeptide; interaction. Interacts (when poly-ADP-ribosylated) with isoform 1 of MACROH2A1; MACROH2A1 specifically binds to poly-ADP-ribose chains and inhibits PARP1 activity, limiting the consumption of nuclear NAD(+). Interacts with CARM1; promoting recruitment to replication forks. Interacts with RECQL. Interacts with ZNF32; the interaction reshapes ZNF432 interacting proteins. Interacts with TPRN; TPRN interacts with a number of DNA damage response proteins, is recruited to sites of DNA damage and may play a role in DNA damage repair. As to quaternary structure, interacts (when auto-poly-ADP-ribosylated) with AIFM1. Post-translationally, poly-ADP-ribosylated on serine, glutamate and aspartate residues by autocatalysis. Auto-ADP-ribosylation on serine takes place following interaction with HPF1. Auto poly-ADP-ribosylation on serine residues promotes its dissociation from chromatin. Poly-ADP-ribosylated by PARP2; poly-ADP-ribosylation mediates the recruitment of CHD1L to DNA damage sites. Mono-ADP-ribosylated at Lys-520 by SIRT6 in response to oxidative stress, promoting recruitment to double-strand breaks (DSBs) sites. S-nitrosylated, leading to inhibit transcription regulation activity. In terms of processing, phosphorylated at Thr-593 by PRKDC in response to DNA damage following virus infection, promoting its translocation to the cytosol. Phosphorylated by TXK. Post-translationally, proteolytically cleaved by caspase-3 (CASP3) and caspase-7 (CASP7) in response to apoptosis to generate the Poly [ADP-ribose] polymerase 1, processed N-terminus and Poly [ADP-ribose] polymerase 1, processed C-terminus forms. Sumoylated with SUMO1 or SUMO2 by PIAS4 following prolonged residence (trapping) to chromatin. Sumoylation promotes ubiquitination by RNF4 and removal from chromatin by VCP/p97. In terms of processing, ubiquitinated by RNF4 following sumoylation by PIAS4 in response to prolonged residence (trapping) to chromatin. Ubiquitination promotes removal from chromatin by VCP/p97.

It is found in the chromosome. The protein localises to the nucleus. It localises to the nucleolus. Its subcellular location is the cytoplasm. The protein resides in the cytosol. The catalysed reaction is NAD(+) + (ADP-D-ribosyl)n-acceptor = nicotinamide + (ADP-D-ribosyl)n+1-acceptor + H(+).. It carries out the reaction L-seryl-[protein] + NAD(+) = O-(ADP-D-ribosyl)-L-seryl-[protein] + nicotinamide + H(+). It catalyses the reaction L-aspartyl-[protein] + NAD(+) = 4-O-(ADP-D-ribosyl)-L-aspartyl-[protein] + nicotinamide. The enzyme catalyses L-glutamyl-[protein] + NAD(+) = 5-O-(ADP-D-ribosyl)-L-glutamyl-[protein] + nicotinamide. The catalysed reaction is L-tyrosyl-[protein] + NAD(+) = O-(ADP-D-ribosyl)-L-tyrosyl-[protein] + nicotinamide + H(+). It carries out the reaction L-histidyl-[protein] + NAD(+) = N(tele)-(ADP-D-ribosyl)-L-histidyl-[protein] + nicotinamide + H(+). ADP-ribosyltransferase activity is regulated via an allosteric activation mechanism. In absence of activation signal, PARP1 is autoinhibited by the PARP alpha-helical domain (also named HD region), which prevents effective NAD(+)-binding. Activity is highly stimulated by signals, such as DNA strand breaks. Binding to damaged DNA unfolds the PARP alpha-helical domain, relieving autoinhibition. Poly-ADP-ribosyltransferase activity is tightly regulated and PARP1 is removed from damaged chromatin following initial poly-ADP-ribosylation of chromatin to avoid prolonged residence (trapping) that has cytotoxic consequences. A number of factors (VCP/p97) or post-translational modifications (auto-poly-ADP-ribosylation or ubiquitination) promote PARP1 removal from chromatin. Poly-ADP-ribosyltransferase that mediates poly-ADP-ribosylation of proteins and plays a key role in DNA repair. Mediates glutamate, aspartate, serine, histidine or tyrosine ADP-ribosylation of proteins: the ADP-D-ribosyl group of NAD(+) is transferred to the acceptor carboxyl group of target residues and further ADP-ribosyl groups are transferred to the 2'-position of the terminal adenosine moiety, building up a polymer with an average chain length of 20-30 units. Serine ADP-ribosylation of proteins constitutes the primary form of ADP-ribosylation of proteins in response to DNA damage. Specificity for the different amino acids is conferred by interacting factors, such as HPF1 and NMNAT1. Following interaction with HPF1, catalyzes serine ADP-ribosylation of target proteins; HPF1 confers serine specificity by completing the PARP1 active site. Also catalyzes tyrosine ADP-ribosylation of target proteins following interaction with HPF1. Following interaction with NMNAT1, catalyzes glutamate and aspartate ADP-ribosylation of target proteins; NMNAT1 confers glutamate and aspartate specificity. PARP1 initiates the repair of DNA breaks: recognizes and binds DNA breaks within chromatin and recruits HPF1, licensing serine ADP-ribosylation of target proteins, such as histones (H2BS6ADPr and H3S10ADPr), thereby promoting decompaction of chromatin and the recruitment of repair factors leading to the reparation of DNA strand breaks. HPF1 initiates serine ADP-ribosylation but restricts the polymerase activity of PARP1 in order to limit the length of poly-ADP-ribose chains. In addition to base excision repair (BER) pathway, also involved in double-strand breaks (DSBs) repair: together with TIMELESS, accumulates at DNA damage sites and promotes homologous recombination repair by mediating poly-ADP-ribosylation. Mediates the poly-ADP-ribosylation of a number of proteins, including itself, APLF, CHFR and NFAT5. In addition to proteins, also able to ADP-ribosylate DNA: catalyzes ADP-ribosylation of DNA strand break termini containing terminal phosphates and a 2'-OH group in single- and double-stranded DNA, respectively. Required for PARP9 and DTX3L recruitment to DNA damage sites. PARP1-dependent PARP9-DTX3L-mediated ubiquitination promotes the rapid and specific recruitment of 53BP1/TP53BP1, UIMC1/RAP80, and BRCA1 to DNA damage sites. PARP1-mediated DNA repair in neurons plays a role in sleep: senses DNA damage in neurons and promotes sleep, facilitating efficient DNA repair. In addition to DNA repair, also involved in other processes, such as transcription regulation, programmed cell death, membrane repair, adipogenesis and innate immunity. Acts as a repressor of transcription: binds to nucleosomes and modulates chromatin structure in a manner similar to histone H1, thereby altering RNA polymerase II. Acts both as a positive and negative regulator of transcription elongation, depending on the context. Acts as a positive regulator of transcription elongation by mediating poly-ADP-ribosylation of NELFE, preventing RNA-binding activity of NELFE and relieving transcription pausing. Acts as a negative regulator of transcription elongation in response to DNA damage by catalyzing poly-ADP-ribosylation of CCNT1, disrupting the phase separation activity of CCNT1 and subsequent activation of CDK9. Involved in replication fork progression following interaction with CARM1: mediates poly-ADP-ribosylation at replication forks, slowing fork progression. Poly-ADP-ribose chains generated by PARP1 also play a role in poly-ADP-ribose-dependent cell death, a process named parthanatos. Also acts as a negative regulator of the cGAS-STING pathway. Acts by mediating poly-ADP-ribosylation of CGAS: PARP1 translocates into the cytosol following phosphorylation by PRKDC and catalyzes poly-ADP-ribosylation and inactivation of CGAS. Acts as a negative regulator of adipogenesis: catalyzes poly-ADP-ribosylation of histone H2B on 'Glu-35' (H2BE35ADPr) following interaction with NMNAT1, inhibiting phosphorylation of H2B at 'Ser-36' (H2BS36ph), thereby blocking expression of pro-adipogenetic genes. Involved in the synthesis of ATP in the nucleus, together with NMNAT1, PARG and NUDT5. Nuclear ATP generation is required for extensive chromatin remodeling events that are energy-consuming. Its function is as follows. Promotes AIFM1-mediated apoptosis. This form, which translocates into the cytoplasm following cleavage by caspase-3 (CASP3) and caspase-7 (CASP7) in response to apoptosis, is auto-poly-ADP-ribosylated and serves as a poly-ADP-ribose carrier to induce AIFM1-mediated apoptosis. Functionally, this cleavage form irreversibly binds to DNA breaks and interferes with DNA repair, promoting DNA damage-induced apoptosis. The protein is Poly [ADP-ribose] polymerase 1 (PARP1) of Cricetulus griseus (Chinese hamster).